Here is a 1047-residue protein sequence, read N- to C-terminus: Rab11 family-interacting protein 3 (1047 aa).

3 disordered regions span residues Met-1 to Glu-107, Ser-311 to His-335, and Pro-475 to Glu-496. Residues Glu-64–Lys-73 show a composition bias toward basic and acidic residues. 2 EF-hand domains span residues Glu-496–Glu-531 and Tyr-528–Gly-563. Positions 509, 511, 513, 520, 541, 543, and 552 each coordinate Ca(2+). Phosphoserine is present on residues Ser-641, Ser-765, and Ser-829. Residues Glu-750–Gln-985 adopt a coiled-coil conformation. The interval Gly-775 to Gln-879 is ARF-binding domain (ABD). A disordered region spans residues Ser-882 to Lys-906. A phosphoserine mark is found at Ser-938 and Ser-939. Residues Gln-985–Lys-1047 enclose the FIP-RBD domain.

Homodimer. Interacts with RAB11A; the interaction is direct and is required for the recruitment to endosomes. Interacts with RAB11B. Forms a ternary complex with RAB11A and dynein intermediate chain DYNC1LI1; RAB11FIP3 links RAB11A to dynein and the interaction regulates endocytic trafficking. Interacts with dynein intermediate chain and dynactin (DCTN1); the interaction activates dynein processivity. Interacts with ARF6 and EXOC7; the interaction serves for recruitment and tethering of recycling endosomes-derived vesicles to the cleavage furrow/midbody. Interacts with RACGAP1/MgcRacGAP; the interaction occurs at late telophase and is required for recruitment and tethering of recycling endosomes-derived vesicles to the cleavage furrow/midbody. Forms a complex with RAB11A and Rabin8/RAB3IP, probably a heterohexamer with two of each protein subunit, where RAB3IP and RAB11FIP3 simultaneously bind to RAB11A; the complex promotes preciliary trafficking. Forms a complex containing RAB11A, ASAP1, RAB3IP, RAP11FIP3 and ARF4; the complex promotes preciliary trafficking; the complex binds to RHO in photoreceptor cells and promotes RHO ciliary transport. Interacts with RAB11FIP4. Interacts with RAB25.

It is found in the recycling endosome membrane. It localises to the cytoplasm. The protein localises to the cytoskeleton. Its subcellular location is the microtubule organizing center. The protein resides in the centrosome. It is found in the cleavage furrow. It localises to the midbody. The protein localises to the golgi apparatus membrane. Its subcellular location is the golgi apparatus. The protein resides in the trans-Golgi network membrane. Functionally, downstream effector molecule for Rab11 GTPase which is involved in endocytic trafficking, cytokinesis and intracellular ciliogenesis by participating in membrane delivery. Recruited by Rab11 to endosomes where it links Rab11 to dynein motor complex. The functional Rab11-RAB11FIP3-dynein complex regulates the movement of peripheral sorting endosomes (SE) along microtubule tracks toward the microtubule organizing center/centrosome, generating the endocytic recycling compartment (ERC) during interphase of cell cycle. Facilitates the interaction between dynein and dynactin and activates dynein processivity. Binding with ASAP1 is needed to regulate the pericentrosomal localization of recycling endosomes. The Rab11-RAB11FIP3 complex is also implicated in the transport during telophase of vesicles derived from recycling endosomes to the cleavage furrow via centrosome-anchored microtubules, where the vesicles function to deliver membrane during late cytokinesis and abscission. The recruitment of Rab11-RAB11FIP3-containing endosomes to the cleavage furrow and tethering to the midbody is co-mediated by RAB11FIP3 interaction with ARF6-exocyst and RACGAP1-MKLP1 tethering complexes. Also involved in the Rab11-Rabin8-Rab8 ciliogenesis cascade by facilitating the orderly assembly of a ciliary targeting complex containing Rab11, ASAP1, Rabin8/RAB3IP, RAB11FIP3 and ARF4, which directs preciliary vesicle trafficking to mother centriole and ciliogenesis initiation. Also promotes the activity of Rab11 and ASAP1 in the ARF4-dependent Golgi-to-cilia transport of the sensory receptor rhodopsin. Competes with WDR44 for binding to Rab11, which controls intracellular ciliogenesis pathway. May play a role in breast cancer cell motility by regulating actin cytoskeleton. This is Rab11 family-interacting protein 3 from Mus musculus (Mouse).